The chain runs to 281 residues: Pantothenate synthetase (281 aa).

26-33 (MGSLHEGH) serves as a coordination point for ATP. Residue His33 is the Proton donor of the active site. Gln57 serves as a coordination point for (R)-pantoate. Gln57 lines the beta-alanine pocket. 144-147 (GKKD) provides a ligand contact to ATP. Gln150 is a (R)-pantoate binding site. Residues Ala173 and 181 to 184 (LSSR) each bind ATP.

Belongs to the pantothenate synthetase family. As to quaternary structure, homodimer.

The protein localises to the cytoplasm. The catalysed reaction is (R)-pantoate + beta-alanine + ATP = (R)-pantothenate + AMP + diphosphate + H(+). It participates in cofactor biosynthesis; (R)-pantothenate biosynthesis; (R)-pantothenate from (R)-pantoate and beta-alanine: step 1/1. Functionally, catalyzes the condensation of pantoate with beta-alanine in an ATP-dependent reaction via a pantoyl-adenylate intermediate. The sequence is that of Pantothenate synthetase from Methylibium petroleiphilum (strain ATCC BAA-1232 / LMG 22953 / PM1).